The chain runs to 571 residues: L-erythrulose 1-kinase (571 aa).

Positions 7-331 (SPDDFADEAV…WTAPVETPAY (325 aa)) constitute a DhaK domain. His217 serves as the catalytic Tele-hemiaminal-histidine intermediate. The DhaL domain occupies 367–567 (RNIVAVLETF…FAMLMKALGE (201 aa)). ATP-binding positions include 396–402 (DGDHGQG), 442–443 (TS), Gly484, Arg539, and 552–554 (DPG).

It catalyses the reaction L-erythrulose + ATP = L-erythrulose 1-phosphate + ADP + H(+). The protein operates within carbohydrate metabolism; L-threitol degradation. Functionally, kinase that has a preference for L-erythrulose, producing L-erythrulose-1P. Involved in the degradation pathway of L-threitol, that allows M.smegmatis to grow on this compound as the sole carbon source. Is also able to phosphorylate D-erythrulose and dihydroxyacetone in vitro. The polypeptide is L-erythrulose 1-kinase (Mycolicibacterium smegmatis (strain ATCC 700084 / mc(2)155) (Mycobacterium smegmatis)).